We begin with the raw amino-acid sequence, 307 residues long: Protoheme IX farnesyltransferase (307 aa).

9 helical membrane passes run 29–49, 51–71, 101–120, 124–143, 151–171, 179–199, 218–238, 239–259, and 280–300; these read VISL…RGWP, LGLL…AGVF, AAIF…WVWA, AAWM…TLWL, IVLG…AVTG, FLFA…ALMI, RLTV…SVMP, VFLG…GWLL, and VAVP…VAGA.

Belongs to the UbiA prenyltransferase family. Protoheme IX farnesyltransferase subfamily.

Its subcellular location is the cell membrane. It catalyses the reaction heme b + (2E,6E)-farnesyl diphosphate + H2O = Fe(II)-heme o + diphosphate. It functions in the pathway porphyrin-containing compound metabolism; heme O biosynthesis; heme O from protoheme: step 1/1. Its function is as follows. Converts heme B (protoheme IX) to heme O by substitution of the vinyl group on carbon 2 of heme B porphyrin ring with a hydroxyethyl farnesyl side group. This chain is Protoheme IX farnesyltransferase, found in Deinococcus geothermalis (strain DSM 11300 / CIP 105573 / AG-3a).